Consider the following 542-residue polypeptide: Organic anion transporter 3 (542 aa).

Residues 1–9 lie on the Cytoplasmic side of the membrane; it reads MTFSEILDR. Ser4 is modified (phosphoserine). The helical transmembrane segment at 10–30 threads the bilayer; it reads VGSMGHFQFLHVAILGLPILN. Residues 31 to 123 lie on the Extracellular side of the membrane; that stretch reads MANHNLLQIF…LVCNSNKLKE (93 aa). 2 N-linked (GlcNAc...) asparagine glycosylation sites follow: Asn86 and Asn102. Residues 124–144 traverse the membrane as a helical segment; the sequence is MAQSIFMAGILIGGLVLGDLS. At 145–154 the chain is on the cytoplasmic side; sequence DRFGRRPILT. Residues 155–175 form a helical membrane-spanning segment; that stretch reads CSYLLLAASGSGAAFSPTFPI. Residue Tyr176 is a topological domain, extracellular. The chain crosses the membrane as a helical span at residues 177-197; sequence MVFRFLCGFGISGITLSTVIL. At 198 to 212 the chain is on the cytoplasmic side; sequence NVEWVPTRMRAIMST. Residues 213–233 traverse the membrane as a helical segment; sequence ALGYCYTFGQFILPGLAYAIP. The Extracellular portion of the chain corresponds to 234 to 236; sequence QWR. A helical membrane pass occupies residues 237 to 257; sequence WLQLTVSIPFFVFFLSSWWTP. At 258-327 the chain is on the cytoplasmic side; sequence ESIRWLVLSG…FRIPMLRRMT (70 aa). Residues 328-348 form a helical membrane-spanning segment; the sequence is FCLSLAWFATGFAYYSLAMGV. Over 349–354 the chain is Extracellular; sequence EEFGVN. A helical transmembrane segment spans residues 355-375; sequence LYILQIIFGGVDVPAKFITIL. Topologically, residues 376 to 386 are cytoplasmic; that stretch reads SLSYLGRHTTQ. A helical membrane pass occupies residues 387–407; that stretch reads AAALLLAGGAILALTFVPLDL. The Extracellular segment spans residues 408-411; the sequence is QTVR. The chain crosses the membrane as a helical span at residues 412-432; that stretch reads TVLAVFGKGCLSSSFSCLFLY. Over 433-471 the chain is Cytoplasmic; that stretch reads TSELYPTVIRQTGMGVSNLWTRVGSMVSPLVKITGEVQP. Residues 472–492 traverse the membrane as a helical segment; it reads FIPNIIYGITALLGGSAALFL. The Extracellular portion of the chain corresponds to 493–542; it reads PETLNQPLPETIEDLENWSLRAKKPKQEPEVEKASQRIPLQPHGPGLGSS. The segment at 515-542 is disordered; the sequence is KKPKQEPEVEKASQRIPLQPHGPGLGSS. A compositionally biased stretch (basic and acidic residues) spans 517 to 527; the sequence is PKQEPEVEKAS.

Belongs to the major facilitator (TC 2.A.1) superfamily. Organic cation transporter (TC 2.A.1.19) family. In terms of tissue distribution, strongly expressed in kidney. Weaker expression in brain and skeletal muscle. Expressed in adrenal glands.

The protein localises to the basolateral cell membrane. The enzyme catalyses estrone 3-sulfate(out) + glutarate(in) = estrone 3-sulfate(in) + glutarate(out). It carries out the reaction estrone 3-sulfate(in) + 2-oxoglutarate(out) = estrone 3-sulfate(out) + 2-oxoglutarate(in). It catalyses the reaction glutarate(in) + 2-oxoglutarate(out) = glutarate(out) + 2-oxoglutarate(in). The catalysed reaction is urate(in) + 2-oxoglutarate(out) = urate(out) + 2-oxoglutarate(in). The enzyme catalyses taurocholate(out) + glutarate(in) = taurocholate(in) + glutarate(out). It carries out the reaction dehydroepiandrosterone 3-sulfate(out) + glutarate(in) = dehydroepiandrosterone 3-sulfate(in) + glutarate(out). It catalyses the reaction prostaglandin F2alpha(out) + glutarate(in) = prostaglandin F2alpha(in) + glutarate(out). The catalysed reaction is prostaglandin F2alpha(out) + 2-oxoglutarate(in) = prostaglandin F2alpha(in) + 2-oxoglutarate(out). The enzyme catalyses (R)-carnitine(out) + 2-oxoglutarate(in) = (R)-carnitine(in) + 2-oxoglutarate(out). It carries out the reaction glutarate(in) + (R)-carnitine(out) = glutarate(out) + (R)-carnitine(in). It catalyses the reaction prostaglandin E2(out) + 2-oxoglutarate(in) = prostaglandin E2(in) + 2-oxoglutarate(out). The catalysed reaction is prostaglandin E2(out) + glutarate(in) = prostaglandin E2(in) + glutarate(out). The enzyme catalyses urate(in) + glutarate(out) = urate(out) + glutarate(in). It carries out the reaction taurocholate(out) + 2-oxoglutarate(in) = taurocholate(in) + 2-oxoglutarate(out). It catalyses the reaction dehydroepiandrosterone 3-sulfate(out) + 2-oxoglutarate(in) = dehydroepiandrosterone 3-sulfate(in) + 2-oxoglutarate(out). The catalysed reaction is kynurenate(out) + a dicarboxylate(in) = kynurenate(in) + a dicarboxylate(out). The enzyme catalyses (indol-3-yl)acetate(out) + a dicarboxylate(in) = (indol-3-yl)acetate(in) + a dicarboxylate(out). It carries out the reaction indoxyl sulfate(out) + a dicarboxylate(in) = indoxyl sulfate(in) + a dicarboxylate(out). It catalyses the reaction N-benzoylglycine(out) + a dicarboxylate(in) = N-benzoylglycine(in) + a dicarboxylate(out). The catalysed reaction is 3-carboxy-4-methyl-5-propyl-2-furanpropanoate(out) + a dicarboxylate(in) = 3-carboxy-4-methyl-5-propyl-2-furanpropanoate(in) + a dicarboxylate(out). The enzyme catalyses (6R)-L-erythro-5,6,7,8-tetrahydrobiopterin(out) + a dicarboxylate(in) = (6R)-L-erythro-5,6,7,8-tetrahydrobiopterin(in) + a dicarboxylate(out). It carries out the reaction L-erythro-7,8-dihydrobiopterin(out) + a dicarboxylate(in) = L-erythro-7,8-dihydrobiopterin(in) + a dicarboxylate(out). It catalyses the reaction L-sepiapterin(out) + a dicarboxylate(in) = L-sepiapterin(in) + a dicarboxylate(out). Its function is as follows. Functions as an organic anion/dicarboxylate exchanger that couples organic anion uptake indirectly to the sodium gradient. Transports organic anions such as estrone 3-sulfate (E1S) and urate in exchange for dicarboxylates such as glutarate or ketoglutarate (2-oxoglutarate). Plays an important role in the excretion of endogenous and exogenous organic anions, especially from the kidney and the brain. E1S transport is pH- and chloride-dependent and may also involve E1S/cGMP exchange. Responsible for the transport of prostaglandin E2 (PGE2) and prostaglandin F2(alpha) (PGF2(alpha)) in the basolateral side of the renal tubule. Involved in the transport of neuroactive tryptophan metabolites kynurenate and xanthurenate. Functions as a biopterin transporters involved in the uptake and the secretion of coenzymes tetrahydrobiopterin (BH4), dihydrobiopterin (BH2) and sepiapterin to urine, thereby determining baseline levels of blood biopterins. May be involved in the basolateral transport of steviol, a metabolite of the popular sugar substitute stevioside. May participate in the detoxification/ renal excretion of drugs and xenobiotics, such as the histamine H(2)-receptor antagonists fexofenadine and cimetidine, the antibiotic benzylpenicillin (PCG), the anionic herbicide 2,4-dichloro-phenoxyacetate (2,4-D), the diagnostic agent p-aminohippurate (PAH), the antiviral acyclovir (ACV), and the mycotoxin ochratoxin (OTA), by transporting these exogenous organic anions across the cell membrane in exchange for dicarboxylates such as 2-oxoglutarate. Contributes to the renal uptake of potent uremic toxins (indoxyl sulfate (IS), indole acetate (IA), hippurate/N-benzoylglycine (HA) and 3-carboxy-4-methyl-5-propyl-2-furanpropionate (CMPF)), pravastatin, PCG, E1S and dehydroepiandrosterone sulfate (DHEAS), and is partly involved in the renal uptake of temocaprilat (an angiotensin-converting enzyme (ACE) inhibitor). May contribute to the release of cortisol in the adrenals. Involved in one of the detoxification systems on the choroid plexus (CP), removes substrates such as E1S or taurocholate (TC), PCG, 2,4-D and PAH, from the cerebrospinal fluid (CSF) to the blood for eventual excretion in urine and bile. Also contributes to the uptake of several other organic compounds such as the prostanoids prostaglandin E(2) and prostaglandin F(2-alpha), L-carnitine, and the therapeutic drugs allopurinol, 6-mercaptopurine (6-MP) and 5-fluorouracil (5-FU). Mediates the transport of PAH, PCG, and the statins pravastatin and pitavastatin, from the cerebrum into the blood circulation across the blood-brain barrier (BBB). In summary, plays a role in the efflux of drugs and xenobiotics, helping reduce their undesired toxicological effects on the body. The chain is Organic anion transporter 3 from Homo sapiens (Human).